We begin with the raw amino-acid sequence, 344 residues long: Secreted LysM effector LysM2 (344 aa).

Residues 1 to 24 form the signal peptide; that stretch reads MMAPKSLQTGLLILLLAKLKLAWG. A LysM 1 domain is found at 36–80; the sequence is YEAAASSGDTCTSFAAEWGLTEETFASLNPSAACPSLVAGQNYCM. Residues 88-134 are compositionally biased toward low complexity; that stretch reads STTSSSSSTTSSSTTSSSTTSSSTTSSSTTTSSFTTTTASETTSTAA. The segment at 88-141 is disordered; the sequence is STTSSSSSTTSSSTTSSSTTSSSTTSSSTTTSSFTTTTASETTSTAANGVTTPM. LysM domains are found at residues 153–199, 216–262, and 296–342; these read KFDL…YVCV and KFWL…YICV.

It belongs to the secreted LysM effector family.

In terms of biological role, might have a role in sequestration of chitin oligosaccharides (breakdown products of fungal cell walls that are released during invasion and act as triggers of host immunity) to dampen host defense. The chain is Secreted LysM effector LysM2 from Penicillium expansum (Blue mold rot fungus).